Here is a 358-residue protein sequence, read N- to C-terminus: uncharacterized protein (358 aa).

Positions 1–47 (MGNVAGETRANVIPLHTNRSRVAARRRAGQRAESRQHPSLLSDPNDR) are disordered. Residues 18–29 (NRSRVAARRRAG) are compositionally biased toward basic residues.

It to M.leprae ML2427.

This is an uncharacterized protein from Mycobacterium tuberculosis (strain CDC 1551 / Oshkosh).